Reading from the N-terminus, the 218-residue chain is MAKKSVSVIAAKTAVHAAVLAPIALLGWQFWQVWQQGSDALGADPVAEIEHRTGLWALRLLLITLAITPLRQLTGQAVLIRFRRMLGLYTFFYASVHLTAYLWLDLRGFWTQIFEEIVKRPYITVGFTAWLLLVPLAITSTQGWMRRLKRNWGRLHMLIYPIGLLAVLHFWWLVKSDIREPALYAGILALLLGWRVWKRLSARRTTARHSAPPPATPR.

The next 5 membrane-spanning stretches (helical) occupy residues 14–34, 60–80, 86–106, 121–141, and 155–175; these read AVHAAVLAPIALLGWQFWQVW, LLLITLAITPLRQLTGQAVLI, LGLYTFFYASVHLTAYLWLDL, PYITVGFTAWLLLVPLAITST, and LHMLIYPIGLLAVLHFWWLVK.

The protein belongs to the MsrQ family. Heterodimer of a catalytic subunit (MsrP) and a heme-binding subunit (MsrQ). FMN is required as a cofactor. Heme b serves as cofactor.

Its subcellular location is the cell inner membrane. Part of the MsrPQ system that repairs oxidized periplasmic proteins containing methionine sulfoxide residues (Met-O), using respiratory chain electrons. Thus protects these proteins from oxidative-stress damage caused by reactive species of oxygen and chlorine generated by the host defense mechanisms. MsrPQ is essential for the maintenance of envelope integrity under bleach stress, rescuing a wide series of structurally unrelated periplasmic proteins from methionine oxidation. MsrQ provides electrons for reduction to the reductase catalytic subunit MsrP, using the quinone pool of the respiratory chain. The polypeptide is Protein-methionine-sulfoxide reductase heme-binding subunit MsrQ (Xanthomonas campestris pv. campestris (strain B100)).